Here is a 122-residue protein sequence, read N- to C-terminus: Large-conductance mechanosensitive channel (122 aa).

2 consecutive transmembrane segments (helical) span residues 14 to 34 (VLDLAVGVIIGAAFTALVKSL) and 67 to 87 (GAFLNDVINFIITAFVIFILI).

It belongs to the MscL family. As to quaternary structure, homopentamer.

Its subcellular location is the cell membrane. In terms of biological role, channel that opens in response to stretch forces in the membrane lipid bilayer. May participate in the regulation of osmotic pressure changes within the cell. The protein is Large-conductance mechanosensitive channel of Lactococcus lactis subsp. lactis (strain IL1403) (Streptococcus lactis).